A 233-amino-acid chain; its full sequence is Small ribosomal subunit protein uS3 (233 aa).

In terms of domain architecture, KH type-2 spans 39 to 107 (VRQFLMKTLE…PVQINISEVR (69 aa)).

This sequence belongs to the universal ribosomal protein uS3 family. As to quaternary structure, part of the 30S ribosomal subunit. Forms a tight complex with proteins S10 and S14.

Binds the lower part of the 30S subunit head. Binds mRNA in the 70S ribosome, positioning it for translation. The polypeptide is Small ribosomal subunit protein uS3 (Buchnera aphidicola subsp. Acyrthosiphon pisum (strain 5A)).